The primary structure comprises 75 residues: Antitoxin MT0312 (75 aa).

Antitoxin component of a type II toxin-antitoxin (TA) system. In Mycobacterium tuberculosis (strain CDC 1551 / Oshkosh), this protein is Antitoxin MT0312.